The following is a 273-amino-acid chain: Dermonecrotic toxin LarSicTox-alphaVII1 (273 aa).

Residue His5 is part of the active site. Positions 25 and 27 each coordinate Mg(2+). The active-site Nucleophile is the His41. Intrachain disulfides connect Cys45/Cys51 and Cys47/Cys192. Mg(2+) is bound at residue Asp85.

This sequence belongs to the arthropod phospholipase D family. Class II subfamily. The cofactor is Mg(2+). Expressed by the venom gland.

Its subcellular location is the secreted. It catalyses the reaction an N-(acyl)-sphingosylphosphocholine = an N-(acyl)-sphingosyl-1,3-cyclic phosphate + choline. It carries out the reaction an N-(acyl)-sphingosylphosphoethanolamine = an N-(acyl)-sphingosyl-1,3-cyclic phosphate + ethanolamine. The catalysed reaction is a 1-acyl-sn-glycero-3-phosphocholine = a 1-acyl-sn-glycero-2,3-cyclic phosphate + choline. The enzyme catalyses a 1-acyl-sn-glycero-3-phosphoethanolamine = a 1-acyl-sn-glycero-2,3-cyclic phosphate + ethanolamine. Functionally, dermonecrotic toxins cleave the phosphodiester linkage between the phosphate and headgroup of certain phospholipids (sphingolipid and lysolipid substrates), forming an alcohol (often choline) and a cyclic phosphate. This toxin acts on sphingomyelin (SM). It may also act on ceramide phosphoethanolamine (CPE), lysophosphatidylcholine (LPC) and lysophosphatidylethanolamine (LPE), but not on lysophosphatidylserine (LPS), and lysophosphatidylglycerol (LPG). It acts by transphosphatidylation, releasing exclusively cyclic phosphate products as second products. Induces dermonecrosis, hemolysis, increased vascular permeability, edema, inflammatory response, and platelet aggregation. The chain is Dermonecrotic toxin LarSicTox-alphaVII1 from Loxosceles arizonica (Arizona brown spider).